Here is a 168-residue protein sequence, read N- to C-terminus: Transcription elongation factor GreB (168 aa).

It belongs to the GreA/GreB family. GreB subfamily.

Its function is as follows. Necessary for efficient RNA polymerase transcription elongation past template-encoded arresting sites. The arresting sites in DNA have the property of trapping a certain fraction of elongating RNA polymerases that pass through, resulting in locked ternary complexes. Cleavage of the nascent transcript by cleavage factors such as GreA or GreB allows the resumption of elongation from the new 3'terminus. GreB releases sequences of up to 9 nucleotides in length. The polypeptide is Transcription elongation factor GreB (Xanthomonas axonopodis pv. citri (strain 306)).